Consider the following 552-residue polypeptide: ATP synthase subunit alpha (552 aa).

173-180 (GDRQTGKT) serves as a coordination point for ATP. Positions 526 to 552 (ASPLDPSAVRKESIPVHRAPARTDDEG) are disordered. Basic and acidic residues predominate over residues 533–552 (AVRKESIPVHRAPARTDDEG).

The protein belongs to the ATPase alpha/beta chains family. F-type ATPases have 2 components, CF(1) - the catalytic core - and CF(0) - the membrane proton channel. CF(1) has five subunits: alpha(3), beta(3), gamma(1), delta(1), epsilon(1). CF(0) has three main subunits: a(1), b(2) and c(9-12). The alpha and beta chains form an alternating ring which encloses part of the gamma chain. CF(1) is attached to CF(0) by a central stalk formed by the gamma and epsilon chains, while a peripheral stalk is formed by the delta and b chains.

The protein resides in the cell membrane. It carries out the reaction ATP + H2O + 4 H(+)(in) = ADP + phosphate + 5 H(+)(out). Produces ATP from ADP in the presence of a proton gradient across the membrane. The alpha chain is a regulatory subunit. This Frankia alni (strain DSM 45986 / CECT 9034 / ACN14a) protein is ATP synthase subunit alpha.